We begin with the raw amino-acid sequence, 469 residues long: Calcium-binding mitochondrial carrier protein SCaMC-2-B (469 aa).

The Mitochondrial intermembrane portion of the chain corresponds to 1 to 189 (MLCLCLYVPV…EKNTGMWWRH (189 aa)). EF-hand domains lie at 47 to 80 (SYRK…RDHE), 78 to 113 (DHEK…LGVH), and 114 to 149 (ISEE…HPAE). Residues Asp60, Asp62, Asp64, Gln66, and Glu71 each coordinate Ca(2+). 3 Solcar repeats span residues 184-270 (GMWW…IKRL), 278-363 (LGIL…LKNS), and 375-463 (PGVF…LKIT). A helical membrane pass occupies residues 190 to 207 (LVAGGGAGAVSRTCTAPL). At 208–244 (DRLKVLMQVHATRSNSMGIAGGFTQMIREGGLRSLWR) the chain is on the mitochondrial matrix side. Residues 245–264 (GNGINVLKIAPESAIKFMAY) form a helical membrane-spanning segment. Residues 265 to 287 (EQIKRLIGSNQETLGILERLVSG) are Mitochondrial intermembrane-facing. The chain crosses the membrane as a helical span at residues 288-301 (SLAGAIAQSSIYPM). At 302 to 337 (EVLKTRLALGRTGQYSGIADCAKHIFKKEGMTAFYK) the chain is on the mitochondrial matrix side. A helical membrane pass occupies residues 338 to 357 (GYIPNMLGIIPYAGIDLAVY). At 358 to 380 (ETLKNSWLQRFATDSADPGVFVL) the chain is on the mitochondrial intermembrane side. Residues 381 to 398 (LACGTMSSTCGQLASYPL) traverse the membrane as a helical segment. Residues 399 to 437 (ALVRTRMQAQASQEGSPQMTMSGLFRHIVRTEGAIGLYR) are Mitochondrial matrix-facing. Residues 438 to 457 (GLAPNFMKVIPAVSISYVVY) form a helical membrane-spanning segment. At 458–469 (ENLKITLGVQSR) the chain is on the mitochondrial intermembrane side.

Belongs to the mitochondrial carrier (TC 2.A.29) family.

It localises to the mitochondrion inner membrane. Calcium-dependent mitochondrial solute carrier. This is Calcium-binding mitochondrial carrier protein SCaMC-2-B (slc25a25b) from Danio rerio (Zebrafish).